Here is a 63-residue protein sequence, read N- to C-terminus: Megourin-3 (63 aa).

Monomer. Post-translationally, contains four disulfide bonds.

The protein localises to the secreted. Has antimicrobial activity against Gram-positive bacteria and fungi. In Megoura viciae (Vetch aphid), this protein is Megourin-3.